Here is a 172-residue protein sequence, read N- to C-terminus: C-phycocyanin beta chain (172 aa).

Asn-72 carries the N4-methylasparagine modification. The (2R,3E)-phycocyanobilin site is built by Cys-82 and Cys-153.

It belongs to the phycobiliprotein family. In terms of assembly, heterodimer of an alpha and a beta subunit, which further assembles into trimers and the trimers into hexamers. The basic functional unit of phycobiliproteins is a ring-shaped hexamer formed from two back-to-back trimers contacting via the alpha chain subunits. The trimers are composed of alpha/beta subunit heterodimers arranged around a three-fold axis of symmetry. The phycoerythrins also contain a gamma subunit which is located in the center of the hexamer. Contains two covalently linked bilin chromophores.

The protein localises to the plastid. The protein resides in the chloroplast thylakoid membrane. Light-harvesting photosynthetic bile pigment-protein from the phycobiliprotein complex (phycobilisome, PBS). Phycocyanin is the major phycobiliprotein in the PBS rod. This Porphyra purpurea (Red seaweed) protein is C-phycocyanin beta chain (cpcB).